A 1273-amino-acid chain; its full sequence is Inverted formin-2 (1273 aa).

5 disordered regions span residues 1–30 (MSVK…EANL), 346–387 (GRPR…GQQP), 427–559 (LSSS…PLPG), 960–999 (NKDR…GPGK), and 1021–1273 (KTAR…CVIQ). At serine 2 the chain carries N-acetylserine. One can recognise a GBD/FH3 domain in the interval 2–330 (SVKEGAQRKW…RAVLLASDAQ (329 aa)). Serine 351 bears the Phosphoserine mark. Residues 359-382 (SVQTNSVQNQGSSSQNTTTPTTKV) show a composition bias toward low complexity. The region spanning 421–564 (PLPTPPLSSS…PPLPGFSVPS (144 aa)) is the FH1 domain. Pro residues-rich tracts occupy residues 433–516 (VLPP…PLPS) and 524–558 (QPPP…PPLP). One can recognise an FH2 domain in the interval 589–979 (HRRVNPPTLR…AERRKQQLAE (391 aa)). Residues 907 to 984 (EASQELDKVF…QQLAEEEARR (78 aa)) adopt a coiled-coil conformation. The region spanning 1007–1022 (DALLADIRKGFQLRKT) is the WH2 domain. Over residues 1047–1059 (ATASNPTQGTNHP) the composition is skewed to polar residues. A compositionally biased stretch (basic and acidic residues) spans 1088–1101 (SKEEDGPPALERRS). Serine 1172 and serine 1174 each carry phosphoserine. Over residues 1195 to 1204 (GEDEDGEDTA) the composition is skewed to acidic residues. Threonine 1203 bears the Phosphothreonine mark. Residues serine 1216 and serine 1218 each carry the phosphoserine modification. Threonine 1223 and threonine 1230 each carry phosphothreonine. Residues 1242 to 1251 (TSKRRKKRPS) are compositionally biased toward basic residues.

It belongs to the formin homology family. In terms of assembly, interacts with profilin and actin at the FH1 and FH2 domains respectively. Interacts with DAAM2.

The protein localises to the cytoplasm. Its subcellular location is the perinuclear region. Phosphate inhibits both the depolymerization and severing activities. Its function is as follows. Severs actin filaments and accelerates their polymerization and depolymerization. The protein is Inverted formin-2 (Inf2) of Mus musculus (Mouse).